Consider the following 1213-residue polypeptide: DNA-directed RNA polymerase subunit beta' (1213 aa).

Zn(2+)-binding residues include cysteine 60, cysteine 62, cysteine 75, and cysteine 78. 3 residues coordinate Mg(2+): aspartate 450, aspartate 452, and aspartate 454. Zn(2+)-binding residues include cysteine 819, cysteine 893, cysteine 900, and cysteine 903.

Belongs to the RNA polymerase beta' chain family. The RNAP catalytic core consists of 2 alpha, 1 beta, 1 beta' and 1 omega subunit. When a sigma factor is associated with the core the holoenzyme is formed, which can initiate transcription. It depends on Mg(2+) as a cofactor. Zn(2+) is required as a cofactor.

It catalyses the reaction RNA(n) + a ribonucleoside 5'-triphosphate = RNA(n+1) + diphosphate. In terms of biological role, DNA-dependent RNA polymerase catalyzes the transcription of DNA into RNA using the four ribonucleoside triphosphates as substrates. The protein is DNA-directed RNA polymerase subunit beta' of Streptococcus pyogenes serotype M2 (strain MGAS10270).